Consider the following 331-residue polypeptide: Olfactory receptor 6S1 (331 aa).

Residues 1 to 29 lie on the Extracellular side of the membrane; it reads MSPDGNHSSDPTEFVLAGLPNLNSARVEL. Asn6 is a glycosylation site (N-linked (GlcNAc...) asparagine). A helical membrane pass occupies residues 30 to 50; that stretch reads FSVFLLVYLLNLTGNVLIVGV. Residues 51–59 lie on the Cytoplasmic side of the membrane; it reads VRADTRLQT. Residues 60-80 form a helical membrane-spanning segment; sequence PMYFFLGNLSCLEILLTSVII. Residues 81–99 lie on the Extracellular side of the membrane; sequence PKMLSNFLSRQHTISFAAC. Cys99 and Cys182 are disulfide-bonded. A helical membrane pass occupies residues 100–120; sequence ITQFYFYFFLGASEFLLLAVM. At 121 to 147 the chain is on the cytoplasmic side; that stretch reads SADRYLAICHPLRYPLLMSGAVCFRVA. A helical membrane pass occupies residues 148–168; it reads LACWVGGLVPVLGPTVAVALL. Topologically, residues 169-207 are extracellular; that stretch reads PFCKQGAVVQHFFCDSGPLLRLACTNTKKLEETDFVLAS. The chain crosses the membrane as a helical span at residues 208 to 228; the sequence is LVIVSSLLITAVSYGLIVLAV. At 229-242 the chain is on the cytoplasmic side; the sequence is LSIPSASGRQKAFS. Residues 243–263 form a helical membrane-spanning segment; sequence TCTSHLIVVTLFYGSAIFLYV. Over 264 to 274 the chain is Extracellular; that stretch reads RPSQSGSVDTN. The chain crosses the membrane as a helical span at residues 275–295; it reads WAVTVITTFVTPLLNPFIYAL. Over 296 to 331 the chain is Cytoplasmic; sequence RNEQVKEALKDMFRKVVAGVLGNLLLDKCLSEKAVK.

This sequence belongs to the G-protein coupled receptor 1 family.

It is found in the cell membrane. Functionally, odorant receptor. This is Olfactory receptor 6S1 (OR6S1) from Homo sapiens (Human).